The chain runs to 900 residues: Zinc finger protein 62 homolog (900 aa).

The segment at 1-97 (MSHLKTSTED…EASEKSLHLS (97 aa)) is disordered. K5 participates in a covalent cross-link: Glycyl lysine isopeptide (Lys-Gly) (interchain with G-Cter in SUMO2). Over residues 9–18 (EDEEPTEEYE) the composition is skewed to acidic residues. The span at 47-73 (SKVENQQKKPVENRMKEDKSSIREAIS) shows a compositional bias: basic and acidic residues. Glycyl lysine isopeptide (Lys-Gly) (interchain with G-Cter in SUMO2) cross-links involve residues K48, K62, K65, K82, and K92. Residues 83 to 94 (TEQEGEASEKSL) show a composition bias toward basic and acidic residues. C2H2-type zinc fingers lie at residues 225–247 (CKCD…KRIH), 253–275 (YECG…KRIH), 281–303 (YECD…KRIH), 309–331 (YECD…KSIH), 337–359 (YKCD…KVIH), 365–387 (YECD…KRIH), 393–415 (YKCD…KSIH), 421–443 (HECK…RTIH), 449–471 (YVCD…RRLH), 477–499 (YKCD…KGIH), 505–527 (YKCS…KRIH), 533–555 (FGCD…KRIH), and 561–583 (YKCE…KSVH). A Glycyl lysine isopeptide (Lys-Gly) (interchain with G-Cter in SUMO2) cross-link involves residue K587. 10 C2H2-type zinc fingers span residues 589–611 (FKCD…KKVH), 617–639 (YKCD…RRVH), 645–667 (YECD…KRIH), 673–695 (YECD…KSTH), 701–723 (HTCD…KRVH), 729–751 (FKCV…KRIH), 757–779 (YVCD…KRIH), 785–807 (YECD…KSVH), 813–834 (YNCE…KRIH), and 840–862 (YRCN…KRTH). A Glycyl lysine isopeptide (Lys-Gly) (interchain with G-Cter in SUMO2) cross-link involves residue K748. Residue K882 forms a Glycyl lysine isopeptide (Lys-Gly) (interchain with G-Cter in SUMO2) linkage.

Belongs to the krueppel C2H2-type zinc-finger protein family.

It localises to the nucleus. Functionally, may play a role in differentiating skeletal muscle. The sequence is that of Zinc finger protein 62 homolog (ZFP62) from Homo sapiens (Human).